The sequence spans 195 residues: MEHDTLIQSQIEDSIRVKAQLLPSLLPNIKAAGKVLVDSLKGDGILYFAGNGGSSCDASHIAAELVIRYKSGNERKAIPAIALNSDQAVLTACANDYGYEFLFQRQLQAFGKSKDVFIGLTTSGNSKNIILAVEEAKKNGMKVVLLLGGDGGKLKGKADVEIIIPSSVTARIQESHILIGHILCSIIEKELFGLD.

The region spanning 36–195 (LVDSLKGDGI…IIEKELFGLD (160 aa)) is the SIS domain. A substrate-binding site is contributed by 51–53 (NGG). Residues His-60 and Glu-64 each contribute to the Zn(2+) site. Residues Glu-64, 95 to 96 (ND), 121 to 123 (TTS), Ser-126, and Gln-173 each bind substrate. Residues Gln-173 and His-181 each contribute to the Zn(2+) site.

This sequence belongs to the SIS family. GmhA subfamily. Zn(2+) is required as a cofactor.

The protein localises to the cytoplasm. The catalysed reaction is 2 D-sedoheptulose 7-phosphate = D-glycero-alpha-D-manno-heptose 7-phosphate + D-glycero-beta-D-manno-heptose 7-phosphate. The protein operates within carbohydrate biosynthesis; D-glycero-D-manno-heptose 7-phosphate biosynthesis; D-glycero-alpha-D-manno-heptose 7-phosphate and D-glycero-beta-D-manno-heptose 7-phosphate from sedoheptulose 7-phosphate: step 1/1. In terms of biological role, catalyzes the isomerization of sedoheptulose 7-phosphate in D-glycero-D-manno-heptose 7-phosphate. The polypeptide is Phosphoheptose isomerase (Leptospira biflexa serovar Patoc (strain Patoc 1 / Ames)).